The primary structure comprises 514 residues: Membrane-bound lytic murein transglycosylase F (514 aa).

The N-terminal stretch at 1–30 (MKKLKINYLFIGILTLLLAAALWPSIPWFG) is a signal peptide. The interval 31–269 (KTENHVAAIQ…RIEEKYLGHG (239 aa)) is non-LT domain. The interval 270-514 (DDFDYVDTRS…LFTPQKKEEK (245 aa)) is LT domain. Residue Glu-314 is part of the active site.

The protein in the N-terminal section; belongs to the bacterial solute-binding protein 3 family. In the C-terminal section; belongs to the transglycosylase Slt family.

The protein localises to the cell outer membrane. The catalysed reaction is Exolytic cleavage of the (1-&gt;4)-beta-glycosidic linkage between N-acetylmuramic acid (MurNAc) and N-acetylglucosamine (GlcNAc) residues in peptidoglycan, from either the reducing or the non-reducing ends of the peptidoglycan chains, with concomitant formation of a 1,6-anhydrobond in the MurNAc residue.. In terms of biological role, murein-degrading enzyme that degrades murein glycan strands and insoluble, high-molecular weight murein sacculi, with the concomitant formation of a 1,6-anhydromuramoyl product. Lytic transglycosylases (LTs) play an integral role in the metabolism of the peptidoglycan (PG) sacculus. Their lytic action creates space within the PG sacculus to allow for its expansion as well as for the insertion of various structures such as secretion systems and flagella. This chain is Membrane-bound lytic murein transglycosylase F, found in Salmonella arizonae (strain ATCC BAA-731 / CDC346-86 / RSK2980).